The sequence spans 191 residues: Rho-related GTP-binding protein RhoH (191 aa).

A GTP-binding site is contributed by 11-18 (GDSAVGKT). Residues 33–41 (YKPTVYENT) carry the Effector region motif. Residue 58 to 62 (DTAGN) coordinates GTP. The interaction with ZAP70 stretch occupies residues 73-86 (YQQADVVLMCYSVA). 116 to 119 (TQTD) contacts GTP. Cysteine 188 bears the Cysteine methyl ester mark. The S-geranylgeranyl cysteine moiety is linked to residue cysteine 188. The propeptide at 189–191 (KIF) is removed in mature form.

This sequence belongs to the small GTPase superfamily. Rho family. As to quaternary structure, interacts with GDI1 and GDI2. Interacts with ZAP70 (via SH2 domains) and the interaction is enhanced by its phosphorylation by LCK. Interacts with SYK and the interaction is enhanced by its phosphorylation by FYN. Post-translationally, phosphorylated on tyrosine by LCK. Phosphorylated by FYN. Phosphorylation enhances the interactions with ZAP70 and SYK and is critical for its function in thymocyte development. As to expression, expression is widespread in hematopoietic cells, including in bone marrow progenitor cells and in differentiated myeloid as well as lymphoid cells. Expressed at high levels in the thymus and mast cells, found in spleen and low-density bone marrow (LDBM) cells and is detected at a low level in neutrophils. In the thymus it is detected in thymocytes of the thymic cortex but not in non-lymphoid cells of fibrovascular and fibroadipose tissues. Expressed in T-cells, B-cells and mast cells.

The protein resides in the cytoplasm. The protein localises to the cell membrane. Its function is as follows. Binds GTP but lacks intrinsic GTPase activity and is resistant to Rho-specific GTPase-activating proteins. Inhibits the activation of NF-kappa-B by TNF and IKKB and the activation of CRK/p38 by TNF. Inhibits activities of RAC1, RHOA and CDC42. Negatively regulates leukotriene production in neutrophils. Negative regulator of hematopoietic progenitor cell proliferation, survival and migration. Critical regulator of thymocyte development and T-cell antigen receptor (TCR) signaling by mediating recruitment and activation of ZAP70. Required for phosphorylation of CD3Z, membrane translocation of ZAP70 and subsequent activation of the ZAP70-mediated pathways. Essential for efficient beta-selection and positive selection by promoting the ZAP70-dependent phosphorylation of the LAT signalosome during pre-TCR and TCR signaling. Crucial for thymocyte maturation during DN3 to DN4 transition and during positive selection. Plays critical roles in mast cell function by facilitating phosphorylation of SYK in Fc epsilon RI-mediated signal transduction. Essential for the phosphorylation of LAT, LCP2, PLCG1 and PLCG2 and for Ca(2+) mobilization in mast cells. This is Rho-related GTP-binding protein RhoH (Rhoh) from Mus musculus (Mouse).